A 198-amino-acid chain; its full sequence is Inner membrane-spanning protein YciB (198 aa).

5 consecutive transmembrane segments (helical) span residues I36–I56, L67–F87, W90–G110, L133–F153, and F162–L182.

The protein belongs to the YciB family.

Its subcellular location is the cell inner membrane. Plays a role in cell envelope biogenesis, maintenance of cell envelope integrity and membrane homeostasis. The protein is Inner membrane-spanning protein YciB of Pseudomonas syringae pv. tomato (strain ATCC BAA-871 / DC3000).